A 132-amino-acid chain; its full sequence is Movement protein TGB3 (132 aa).

Residues 1–11 lie on the Cytoplasmic side of the membrane; the sequence is MVLVVKVDLSN. The helical transmembrane segment at 12–32 threads the bilayer; the sequence is IVLYIVAGCVVVSMLYSPFFS. Residues 33–109 lie on the Lumenal side of the membrane; it reads NDVKASSYAG…TETLFIILSR (77 aa). A helical membrane pass occupies residues 110 to 130; the sequence is LFGLAVFLFMICLMSIVWFWC. The Cytoplasmic portion of the chain corresponds to 131–132; sequence HR.

Belongs to the benyvirus TGB3 movement protein family. As to quaternary structure, interacts with movement proteins TGB1 and TGB2.

It localises to the host cell junction. It is found in the host plasmodesma. Its subcellular location is the host endoplasmic reticulum membrane. Functionally, participates in the transport of viral RNA to the plasmodesmata. TGBp3 most probably contains signals of plasmodesmata targeting is therefore involved in the targeting of TGBp2, and viral RNAs-TGBp1 (RNP complex), to plasmodesmata. Can gate plasmodesmata and increase their size exclusion limit. The chain is Movement protein TGB3 from Beta macrocarpa (Beet).